The sequence spans 296 residues: Diaminopimelate epimerase (296 aa).

Residues Asn-11 and Asn-78 each coordinate substrate. Cys-87 acts as the Proton donor in catalysis. Substrate contacts are provided by residues 88–89, Asn-167, Asn-203, and 221–222; these read GN and ER. Catalysis depends on Cys-230, which acts as the Proton acceptor. Residue 231 to 232 coordinates substrate; that stretch reads GT.

Belongs to the diaminopimelate epimerase family. As to quaternary structure, homodimer.

It is found in the cytoplasm. It carries out the reaction (2S,6S)-2,6-diaminopimelate = meso-2,6-diaminopimelate. It participates in amino-acid biosynthesis; L-lysine biosynthesis via DAP pathway; DL-2,6-diaminopimelate from LL-2,6-diaminopimelate: step 1/1. In terms of biological role, catalyzes the stereoinversion of LL-2,6-diaminopimelate (L,L-DAP) to meso-diaminopimelate (meso-DAP), a precursor of L-lysine and an essential component of the bacterial peptidoglycan. In Mycobacterium leprae (strain Br4923), this protein is Diaminopimelate epimerase.